The following is an 897-amino-acid chain: Beta-galactosidase (897 aa).

Glutamate 459 functions as the Proton donor in the catalytic mechanism. Glutamate 525 functions as the Nucleophile in the catalytic mechanism.

This sequence belongs to the glycosyl hydrolase 2 family.

It catalyses the reaction Hydrolysis of terminal non-reducing beta-D-galactose residues in beta-D-galactosides.. This chain is Beta-galactosidase (cbgA), found in Clostridium acetobutylicum.